Consider the following 400-residue polypeptide: Acetate kinase (400 aa).

Mg(2+) is bound at residue asparagine 10. Lysine 17 serves as a coordination point for ATP. Residue arginine 91 participates in substrate binding. Aspartate 150 (proton donor/acceptor) is an active-site residue. ATP contacts are provided by residues 210-214, 285-287, and 333-337; these read HLGNG, DCR, and GIGEN. Glutamate 387 lines the Mg(2+) pocket.

Belongs to the acetokinase family. As to quaternary structure, homodimer. Requires Mg(2+) as cofactor. Mn(2+) serves as cofactor.

The protein resides in the cytoplasm. The catalysed reaction is acetate + ATP = acetyl phosphate + ADP. Its pathway is metabolic intermediate biosynthesis; acetyl-CoA biosynthesis; acetyl-CoA from acetate: step 1/2. Its function is as follows. Catalyzes the formation of acetyl phosphate from acetate and ATP. Can also catalyze the reverse reaction. The chain is Acetate kinase from Cronobacter sakazakii (strain ATCC BAA-894) (Enterobacter sakazakii).